The following is a 336-amino-acid chain: Heme A synthase (336 aa).

The next 8 membrane-spanning stretches (helical) occupy residues 5-25 (LTRWLLTCCIMVVAMIIVGGI), 92-112 (GRATGLIYILPLIYFYFKGII), 117-137 (ILSYIIVLLLFCVQGFMGWYM), 153-173 (LAFHLIIAVIIYHLLFYKLVK), 191-211 (LIFSVAAIAMIYVQIFLGALV), 253-273 (FIHRLGAYSLSIIVIALIISL), 284-304 (VAFYLSIALLIQLSTGVITLL), and 307-327 (VPIIAASMHQFFAIVLLSVVI). H255 provides a ligand contact to heme. H315 is a binding site for heme.

The protein belongs to the COX15/CtaA family. Type 2 subfamily. Interacts with CtaB. Requires heme b as cofactor.

It localises to the cell membrane. It carries out the reaction Fe(II)-heme o + 2 A + H2O = Fe(II)-heme a + 2 AH2. It functions in the pathway porphyrin-containing compound metabolism; heme A biosynthesis; heme A from heme O: step 1/1. Catalyzes the conversion of heme O to heme A by two successive hydroxylations of the methyl group at C8. The first hydroxylation forms heme I, the second hydroxylation results in an unstable dihydroxymethyl group, which spontaneously dehydrates, resulting in the formyl group of heme A. In Rickettsia bellii (strain RML369-C), this protein is Heme A synthase.